Here is a 337-residue protein sequence, read N- to C-terminus: Phenylalanine--tRNA ligase alpha subunit (337 aa).

Glu-258 serves as a coordination point for Mg(2+).

This sequence belongs to the class-II aminoacyl-tRNA synthetase family. Phe-tRNA synthetase alpha subunit type 1 subfamily. Tetramer of two alpha and two beta subunits. The cofactor is Mg(2+).

It is found in the cytoplasm. The enzyme catalyses tRNA(Phe) + L-phenylalanine + ATP = L-phenylalanyl-tRNA(Phe) + AMP + diphosphate + H(+). The polypeptide is Phenylalanine--tRNA ligase alpha subunit (Paraburkholderia phytofirmans (strain DSM 17436 / LMG 22146 / PsJN) (Burkholderia phytofirmans)).